A 387-amino-acid polypeptide reads, in one-letter code: 3-ketoacyl-CoA thiolase (387 aa).

Cys-91 (acyl-thioester intermediate) is an active-site residue. Active-site proton acceptor residues include His-343 and Cys-373.

Belongs to the thiolase-like superfamily. Thiolase family. Heterotetramer of two alpha chains (FadB) and two beta chains (FadA).

The protein localises to the cytoplasm. The enzyme catalyses an acyl-CoA + acetyl-CoA = a 3-oxoacyl-CoA + CoA. The protein operates within lipid metabolism; fatty acid beta-oxidation. Catalyzes the final step of fatty acid oxidation in which acetyl-CoA is released and the CoA ester of a fatty acid two carbons shorter is formed. This is 3-ketoacyl-CoA thiolase from Shigella dysenteriae serotype 1 (strain Sd197).